A 431-amino-acid chain; its full sequence is Serine--tRNA ligase (431 aa).

Residue 235 to 237 (TAE) coordinates L-serine. ATP is bound by residues 266-268 (RRE) and Val-282. Glu-289 is an L-serine binding site. 353–356 (EASS) provides a ligand contact to ATP. Position 389 (Ser-389) interacts with L-serine.

The protein belongs to the class-II aminoacyl-tRNA synthetase family. Type-1 seryl-tRNA synthetase subfamily. As to quaternary structure, homodimer. The tRNA molecule binds across the dimer.

It localises to the cytoplasm. It carries out the reaction tRNA(Ser) + L-serine + ATP = L-seryl-tRNA(Ser) + AMP + diphosphate + H(+). It catalyses the reaction tRNA(Sec) + L-serine + ATP = L-seryl-tRNA(Sec) + AMP + diphosphate + H(+). The protein operates within aminoacyl-tRNA biosynthesis; selenocysteinyl-tRNA(Sec) biosynthesis; L-seryl-tRNA(Sec) from L-serine and tRNA(Sec): step 1/1. In terms of biological role, catalyzes the attachment of serine to tRNA(Ser). Is also able to aminoacylate tRNA(Sec) with serine, to form the misacylated tRNA L-seryl-tRNA(Sec), which will be further converted into selenocysteinyl-tRNA(Sec). The protein is Serine--tRNA ligase of Chlorobium phaeobacteroides (strain DSM 266 / SMG 266 / 2430).